The sequence spans 529 residues: Meiosis 1 arrest protein (529 aa).

Disordered stretches follow at residues 180 to 201 (KGIQERSDSPSPTEEPSNDESS) and 504 to 529 (AASKASSAAFLPSDSEEGEEERPSHT). The span at 188 to 200 (SPSPTEEPSNDES) shows a compositional bias: polar residues. Serine 516 carries the post-translational modification Phosphoserine.

As to expression, expressed in germ cells of the testis. Expressed from spermatogonia to spermatids. Expressed at very low levels in lung, stomach, thymus. Not detected in Sertoli cells.

It is found in the cytoplasm. Required for meiosis I progression during spermatogenesis. The polypeptide is Meiosis 1 arrest protein (M1ap) (Mus musculus (Mouse)).